Consider the following 1097-residue polypeptide: Protease Do-like 7 (1097 aa).

Residues Val-55 to Leu-243 are serine protease. One can recognise a PDZ domain in the interval Met-269–Val-366. His-524 functions as the Charge relay system in the catalytic mechanism. Positions Thr-546–Phe-556 are enriched in polar residues. The segment at Thr-546–Gly-577 is disordered. Basic and acidic residues predominate over residues Ser-558 to Glu-567. Ser-785 functions as the Charge relay system in the catalytic mechanism.

The protein belongs to the peptidase S1C family.

The protein localises to the cytoplasm. Its function is as follows. Probable serine protease. The polypeptide is Protease Do-like 7 (DEGP7) (Arabidopsis thaliana (Mouse-ear cress)).